We begin with the raw amino-acid sequence, 229 residues long: GTP cyclohydrolase 1 (229 aa).

A disordered region spans residues 1 to 26 (MDAKIKPIRGTNPAEGRPEFQPAELE). The Zn(2+) site is built by cysteine 118, histidine 121, and cysteine 189.

Belongs to the GTP cyclohydrolase I family. As to quaternary structure, toroid-shaped homodecamer, composed of two pentamers of five dimers.

The catalysed reaction is GTP + H2O = 7,8-dihydroneopterin 3'-triphosphate + formate + H(+). Its pathway is cofactor biosynthesis; 7,8-dihydroneopterin triphosphate biosynthesis; 7,8-dihydroneopterin triphosphate from GTP: step 1/1. The protein is GTP cyclohydrolase 1 of Rhodopseudomonas palustris (strain ATCC BAA-98 / CGA009).